We begin with the raw amino-acid sequence, 118 residues long: Small ribosomal subunit protein uS13 (118 aa).

A disordered region spans residues 93 to 118 (RNLPVRGQNTKNNARTRKGPTRPLKR). Residues 106 to 118 (ARTRKGPTRPLKR) show a composition bias toward basic residues.

The protein belongs to the universal ribosomal protein uS13 family. As to quaternary structure, part of the 30S ribosomal subunit. Forms a loose heterodimer with protein S19. Forms two bridges to the 50S subunit in the 70S ribosome.

Its function is as follows. Located at the top of the head of the 30S subunit, it contacts several helices of the 16S rRNA. In the 70S ribosome it contacts the 23S rRNA (bridge B1a) and protein L5 of the 50S subunit (bridge B1b), connecting the 2 subunits; these bridges are implicated in subunit movement. Contacts the tRNAs in the A and P-sites. This chain is Small ribosomal subunit protein uS13, found in Psychrobacter cryohalolentis (strain ATCC BAA-1226 / DSM 17306 / VKM B-2378 / K5).